The following is a 39-amino-acid chain: Natriuretic peptide CnNP-b (39 aa).

Positions Ser-1–Lys-8 are excised as a propeptide. Cys-12 and Cys-28 form a disulfide bridge. The disordered stretch occupies residues Ile-20–Ser-39.

Belongs to the natriuretic peptide family. As to expression, expressed by the venom gland.

The protein resides in the secreted. Functionally, snake venom natriuretic peptide that targets both NPR1 and NPR2. Exhibits hypotensive and vasodepressor activities. The sequence is that of Natriuretic peptide CnNP-b from Cryptophis nigrescens (Eastern small-eyed snake).